Here is a 191-residue protein sequence, read N- to C-terminus: MSQTITLIKDKILSDNYFTLRNITYDLTRRNGEVIRHKREVYDRGNGATILLYNSTKKTVVLVRQFRVATWVNGNQDGMLIETCAGLLDNDEPEVCIRKEAIEETGYDVGEVRKIFELYMSPGGVTELIHFFIAEYHDSERASIGGGVEDEEIEVLELPFSRALEMVRSGEIRDGKTVLLLNYLQTSHLMD.

Residues Tyr-17, 38-40 (KRE), Arg-67, and 85-87 (AGL) each bind GDP-alpha-D-mannose. In terms of domain architecture, Nudix hydrolase spans 43–180 (DRGNGATILL…EIRDGKTVLL (138 aa)). Residues Ala-85, Glu-100, and Glu-104 each contribute to the Mg(2+) site. The short motif at 86–106 (GLLDNDEPEVCIRKEAIEETG) is the Nudix box element. Residues Glu-104, Glu-127, 150 to 151 (DE), and Lys-176 contribute to the GDP-alpha-D-mannose site. Residue Glu-151 participates in Mg(2+) binding.

It belongs to the Nudix hydrolase family. NudK subfamily. Homodimer. Requires Mg(2+) as cofactor.

The enzyme catalyses GDP-alpha-D-mannose + H2O = alpha-D-mannose 1-phosphate + GMP + 2 H(+). In terms of biological role, nucleoside diphosphate sugar hydrolase that hydrolyzes GDP-mannose as its preferred substrate, yielding GMP and mannose-1-phosphate. The protein is GDP-mannose pyrophosphatase (nudK) of Salmonella typhi.